Reading from the N-terminus, the 292-residue chain is Golgi to ER traffic protein 2 (292 aa).

Residues 1-18 (MSELSAEEKRKLLRERRQ) are compositionally biased toward basic and acidic residues. The disordered stretch occupies residues 1–80 (MSELSAEEKR…TPLHDDPEVP (80 aa)). The Cytoplasmic portion of the chain corresponds to 1–158 (MSELSAEEKR…SQYHAYEQKQ (158 aa)). Composition is skewed to polar residues over residues 29-47 (RLNN…NVTS) and 55-71 (ATTT…QSPT). A helical membrane pass occupies residues 159 to 179 (WKARFLVVRWIIHTLNFVYHY). Over 180–205 (IASGYKLSASPYAFVRAQAVDSHVRT) the chain is Lumenal. The helical transmembrane segment at 206–225 (FFTAFLTVEVAVISAYFLVM) threads the bilayer. Over 226–268 (SQPKFKDFSRENLVSRILSMASAVVPAVGRYQPLVTRALVYWN) the chain is Cytoplasmic. The chain crosses the membrane as a helical span at residues 269–289 (GASIFVGDLMLMVFYFGITSV). Residues 290-292 (LGN) lie on the Lumenal side of the membrane.

The protein belongs to the GET2 family. In terms of assembly, component of the Golgi to ER traffic (GET) complex, which is composed of GET1, GET2 and GET3. Within the complex, GET1 and GET2 form a heterotetramer which is stabilized by phosphatidylinositol binding and which binds to the GET3 homodimer.

The protein localises to the endoplasmic reticulum membrane. It is found in the golgi apparatus membrane. Required for the post-translational delivery of tail-anchored (TA) proteins to the endoplasmic reticulum. Together with GET1, acts as a membrane receptor for soluble GET3, which recognizes and selectively binds the transmembrane domain of TA proteins in the cytosol. The GET complex cooperates with the HDEL receptor ERD2 to mediate the ATP-dependent retrieval of resident ER proteins that contain a C-terminal H-D-E-L retention signal from the Golgi to the ER. The polypeptide is Golgi to ER traffic protein 2 (Clavispora lusitaniae (strain ATCC 42720) (Yeast)).